Reading from the N-terminus, the 628-residue chain is tRNA uridine 5-carboxymethylaminomethyl modification enzyme MnmG 1 (628 aa).

11–16 contacts FAD; it reads GAGHAG. 280-294 is an NAD(+) binding site; that stretch reads GPRHCPSIDRKVLNF.

It belongs to the MnmG family. In terms of assembly, homodimer. Heterotetramer of two MnmE and two MnmG subunits. Requires FAD as cofactor.

The protein localises to the cytoplasm. In terms of biological role, NAD-binding protein involved in the addition of a carboxymethylaminomethyl (cmnm) group at the wobble position (U34) of certain tRNAs, forming tRNA-cmnm(5)s(2)U34. The sequence is that of tRNA uridine 5-carboxymethylaminomethyl modification enzyme MnmG 1 from Fusobacterium nucleatum subsp. nucleatum (strain ATCC 25586 / DSM 15643 / BCRC 10681 / CIP 101130 / JCM 8532 / KCTC 2640 / LMG 13131 / VPI 4355).